Reading from the N-terminus, the 346-residue chain is Small ribosomal subunit biogenesis GTPase RsgA (346 aa).

One can recognise a CP-type G domain in the interval 98–261 (VQGGRGPQLA…VIDTPGMRTL (164 aa)). Residues 148-151 (TKAD) and 200-208 (GSSGVGKST) each bind GTP. Zn(2+) contacts are provided by C284, C289, H291, and C297. The tract at residues 317–346 (RKLSDENQHNTPVQSGPRGAKSPAGRGKRR) is disordered.

The protein belongs to the TRAFAC class YlqF/YawG GTPase family. RsgA subfamily. In terms of assembly, monomer. Associates with 30S ribosomal subunit, binds 16S rRNA. Zn(2+) is required as a cofactor.

It localises to the cytoplasm. Its function is as follows. One of several proteins that assist in the late maturation steps of the functional core of the 30S ribosomal subunit. Helps release RbfA from mature subunits. May play a role in the assembly of ribosomal proteins into the subunit. Circularly permuted GTPase that catalyzes slow GTP hydrolysis, GTPase activity is stimulated by the 30S ribosomal subunit. The sequence is that of Small ribosomal subunit biogenesis GTPase RsgA from Mesorhizobium japonicum (strain LMG 29417 / CECT 9101 / MAFF 303099) (Mesorhizobium loti (strain MAFF 303099)).